The sequence spans 363 residues: 3-isopropylmalate dehydrogenase (363 aa).

78 to 91 (GKKWDDLPINQRPE) is an NAD(+) binding site. Arginine 99, arginine 109, arginine 138, and aspartate 227 together coordinate substrate. Residues aspartate 227, aspartate 251, and aspartate 255 each contribute to the Mg(2+) site. 285–297 (GSAPDIEGKNIAN) provides a ligand contact to NAD(+).

It belongs to the isocitrate and isopropylmalate dehydrogenases family. LeuB type 1 subfamily. In terms of assembly, homodimer. Mg(2+) is required as a cofactor. Requires Mn(2+) as cofactor.

The protein resides in the cytoplasm. The enzyme catalyses (2R,3S)-3-isopropylmalate + NAD(+) = 4-methyl-2-oxopentanoate + CO2 + NADH. It participates in amino-acid biosynthesis; L-leucine biosynthesis; L-leucine from 3-methyl-2-oxobutanoate: step 3/4. Its function is as follows. Catalyzes the oxidation of 3-carboxy-2-hydroxy-4-methylpentanoate (3-isopropylmalate) to 3-carboxy-4-methyl-2-oxopentanoate. The product decarboxylates to 4-methyl-2 oxopentanoate. The protein is 3-isopropylmalate dehydrogenase of Buchnera aphidicola subsp. Uroleucon rudbeckiae.